Consider the following 250-residue polypeptide: Peroxiredoxin (250 aa).

Residues 6–163 (PLIGERFPEM…ILRIVKALKL (158 aa)) form the Thioredoxin domain. Cysteine 50 functions as the Cysteine sulfenic acid (-SOH) intermediate in the catalytic mechanism. Arginine 126 is a binding site for substrate. A disulfide bridge connects residues cysteine 207 and cysteine 213.

Belongs to the peroxiredoxin family. Prx6 subfamily. As to quaternary structure, homodecamer. Pentamer of dimers that assemble into a ring structure.

The protein resides in the cytoplasm. It catalyses the reaction a hydroperoxide + [thioredoxin]-dithiol = an alcohol + [thioredoxin]-disulfide + H2O. Functionally, thiol-specific peroxidase that catalyzes the reduction of hydrogen peroxide and organic hydroperoxides to water and alcohols, respectively. Plays a role in cell protection against oxidative stress by detoxifying peroxides. The protein is Peroxiredoxin of Aeropyrum pernix (strain ATCC 700893 / DSM 11879 / JCM 9820 / NBRC 100138 / K1).